The sequence spans 282 residues: ATP phosphoribosyltransferase (282 aa).

It belongs to the ATP phosphoribosyltransferase family. Long subfamily. It depends on Mg(2+) as a cofactor.

Its subcellular location is the cytoplasm. The catalysed reaction is 1-(5-phospho-beta-D-ribosyl)-ATP + diphosphate = 5-phospho-alpha-D-ribose 1-diphosphate + ATP. Its pathway is amino-acid biosynthesis; L-histidine biosynthesis; L-histidine from 5-phospho-alpha-D-ribose 1-diphosphate: step 1/9. Its activity is regulated as follows. Feedback inhibited by histidine. Catalyzes the condensation of ATP and 5-phosphoribose 1-diphosphate to form N'-(5'-phosphoribosyl)-ATP (PR-ATP). Has a crucial role in the pathway because the rate of histidine biosynthesis seems to be controlled primarily by regulation of HisG enzymatic activity. This chain is ATP phosphoribosyltransferase, found in Saccharopolyspora erythraea (strain ATCC 11635 / DSM 40517 / JCM 4748 / NBRC 13426 / NCIMB 8594 / NRRL 2338).